Consider the following 172-residue polypeptide: Putative phosphoesterase BC_1225 (172 aa).

Residue H34 is the Proton donor of the active site. 2 short sequence motifs (HXTX) span residues 34 to 37 and 115 to 118; these read HITL and HLTI. H115 serves as the catalytic Proton acceptor.

This sequence belongs to the 2H phosphoesterase superfamily. YjcG family.

In Bacillus cereus (strain ATCC 14579 / DSM 31 / CCUG 7414 / JCM 2152 / NBRC 15305 / NCIMB 9373 / NCTC 2599 / NRRL B-3711), this protein is Putative phosphoesterase BC_1225.